A 428-amino-acid chain; its full sequence is Stromal membrane-associated protein 2 (428 aa).

Positions glutamine 13–aspartate 139 constitute an Arf-GAP domain. The C4-type zinc finger occupies cysteine 28 to cysteine 51. The span at valine 161–glutamine 172 shows a compositional bias: basic and acidic residues. Disordered stretches follow at residues valine 161–glutamate 182 and serine 222–lysine 258.

May interact with clathrin heavy chains.

In terms of biological role, GTPase activating protein. May play a role in clathrin-dependent retrograde transport from early endosomes to the trans-Golgi network. The chain is Stromal membrane-associated protein 2 (SMAP2) from Gallus gallus (Chicken).